Consider the following 387-residue polypeptide: 1-deoxy-D-xylulose 5-phosphate reductoisomerase (387 aa).

Residues T10, G11, S12, I13, G36, R37, and N124 each coordinate NADPH. Residue K125 participates in 1-deoxy-D-xylulose 5-phosphate binding. E126 provides a ligand contact to NADPH. D150 provides a ligand contact to Mn(2+). S151, E152, S176, and H199 together coordinate 1-deoxy-D-xylulose 5-phosphate. E152 provides a ligand contact to Mn(2+). G205 contributes to the NADPH binding site. 1-deoxy-D-xylulose 5-phosphate contacts are provided by S212, N217, K218, and E221. E221 contacts Mn(2+).

It belongs to the DXR family. It depends on Mg(2+) as a cofactor. The cofactor is Mn(2+).

The catalysed reaction is 2-C-methyl-D-erythritol 4-phosphate + NADP(+) = 1-deoxy-D-xylulose 5-phosphate + NADPH + H(+). It functions in the pathway isoprenoid biosynthesis; isopentenyl diphosphate biosynthesis via DXP pathway; isopentenyl diphosphate from 1-deoxy-D-xylulose 5-phosphate: step 1/6. Its function is as follows. Catalyzes the NADPH-dependent rearrangement and reduction of 1-deoxy-D-xylulose-5-phosphate (DXP) to 2-C-methyl-D-erythritol 4-phosphate (MEP). This is 1-deoxy-D-xylulose 5-phosphate reductoisomerase from Cyanothece sp. (strain PCC 7425 / ATCC 29141).